Reading from the N-terminus, the 102-residue chain is Small ribosomal subunit protein uS10 (102 aa).

The protein belongs to the universal ribosomal protein uS10 family. As to quaternary structure, part of the 30S ribosomal subunit.

In terms of biological role, involved in the binding of tRNA to the ribosomes. This chain is Small ribosomal subunit protein uS10, found in Rhodopseudomonas palustris (strain HaA2).